The following is a 173-amino-acid chain: Peptide methionine sulfoxide reductase MsrA (173 aa).

The active site involves Cys10.

The protein belongs to the MsrA Met sulfoxide reductase family.

It catalyses the reaction L-methionyl-[protein] + [thioredoxin]-disulfide + H2O = L-methionyl-(S)-S-oxide-[protein] + [thioredoxin]-dithiol. The enzyme catalyses [thioredoxin]-disulfide + L-methionine + H2O = L-methionine (S)-S-oxide + [thioredoxin]-dithiol. Its function is as follows. Has an important function as a repair enzyme for proteins that have been inactivated by oxidation. Catalyzes the reversible oxidation-reduction of methionine sulfoxide in proteins to methionine. This chain is Peptide methionine sulfoxide reductase MsrA, found in Nautilia profundicola (strain ATCC BAA-1463 / DSM 18972 / AmH).